Consider the following 346-residue polypeptide: Phosphoribosylformylglycinamidine cyclo-ligase (346 aa).

Belongs to the AIR synthase family.

The protein resides in the cytoplasm. It catalyses the reaction 2-formamido-N(1)-(5-O-phospho-beta-D-ribosyl)acetamidine + ATP = 5-amino-1-(5-phospho-beta-D-ribosyl)imidazole + ADP + phosphate + H(+). The protein operates within purine metabolism; IMP biosynthesis via de novo pathway; 5-amino-1-(5-phospho-D-ribosyl)imidazole from N(2)-formyl-N(1)-(5-phospho-D-ribosyl)glycinamide: step 2/2. The sequence is that of Phosphoribosylformylglycinamidine cyclo-ligase from Geobacillus thermodenitrificans (strain NG80-2).